The sequence spans 714 residues: Hormonally up-regulated neu tumor-associated kinase (714 aa).

Residues 1-15 (MPAAAGDGLLGEPAA) are compositionally biased toward low complexity. The segment at 1–26 (MPAAAGDGLLGEPAAPGGGGGAEDAA) is disordered. A Protein kinase domain is found at 62–320 (LIGSRKLGEG…IQQALANRWL (259 aa)). Residues 68–76 (LGEGSFAKV) and lysine 91 contribute to the ATP site. Aspartate 186 acts as the Proton acceptor in catalysis. A compositionally biased stretch (basic and acidic residues) spans 437–461 (KKPKEQEKRGDFLHRPFSKKLDKNL). Disordered stretches follow at residues 437–471 (KKPK…SGSL), 518–552 (MEFI…HKED), and 590–660 (ARRN…VKSR). A compositionally biased stretch (low complexity) spans 599 to 611 (LSPGLPSGSMSPL). Residues 623–635 (AHEDKNSPPKEEG) are compositionally biased toward basic and acidic residues.

The protein belongs to the protein kinase superfamily. CAMK Ser/Thr protein kinase family. SNF1 subfamily.

It catalyses the reaction L-seryl-[protein] + ATP = O-phospho-L-seryl-[protein] + ADP + H(+). The catalysed reaction is L-threonyl-[protein] + ATP = O-phospho-L-threonyl-[protein] + ADP + H(+). The polypeptide is Hormonally up-regulated neu tumor-associated kinase (HUNK) (Pan troglodytes (Chimpanzee)).